A 426-amino-acid polypeptide reads, in one-letter code: Trigger factor (426 aa).

The 75-residue stretch at 165–239 (GDVYKLNEAG…ISEIKRLELP (75 aa)) folds into the PPIase FKBP-type domain.

Belongs to the FKBP-type PPIase family. Tig subfamily.

It is found in the cytoplasm. It catalyses the reaction [protein]-peptidylproline (omega=180) = [protein]-peptidylproline (omega=0). In terms of biological role, involved in protein export. Acts as a chaperone by maintaining the newly synthesized protein in an open conformation. Functions as a peptidyl-prolyl cis-trans isomerase. The polypeptide is Trigger factor (Pelodictyon phaeoclathratiforme (strain DSM 5477 / BU-1)).